Here is a 209-residue protein sequence, read N- to C-terminus: Putative 3-methyladenine DNA glycosylase (209 aa).

Positions 189–209 are disordered; sequence HVSTTRLGAPKKKRQKRLERR. Positions 197–209 are enriched in basic residues; sequence APKKKRQKRLERR.

It belongs to the DNA glycosylase MPG family.

The sequence is that of Putative 3-methyladenine DNA glycosylase from Chlorobaculum parvum (strain DSM 263 / NCIMB 8327) (Chlorobium vibrioforme subsp. thiosulfatophilum).